Here is a 469-residue protein sequence, read N- to C-terminus: Extracellular endo-alpha-(1-&gt;5)-L-arabinanase 2 (469 aa).

Residues 1–26 (MFNRLFRVCFLAALIMAFTLPNSVYA) form the signal peptide. D38 functions as the Proton acceptor in the catalytic mechanism. Residues D38, D122, 168-171 (NVVD), 188-190 (SYS), and 220-224 (HSRIE) each bind substrate. Catalysis depends on E224, which acts as the Proton donor. H318 serves as a coordination point for Ca(2+).

It belongs to the glycosyl hydrolase 43 family. In terms of assembly, homodimer. Ca(2+) is required as a cofactor.

It localises to the secreted. It catalyses the reaction Endohydrolysis of (1-&gt;5)-alpha-arabinofuranosidic linkages in (1-&gt;5)-arabinans.. Its pathway is glycan metabolism; L-arabinan degradation. Its function is as follows. Involved in the degradation of arabinan and is a key enzyme in the complete degradation of the plant cell wall. Catalyzes the internal cleavage of alpha-(1-&gt;5)-L-arabinofuranosyl residues of the alpha-1,5-L-arabinan to produce arabino-oligosaccharides and L-arabinose. It is also active toward linear branched sugar beet arabinan, and pectin from apple. The protein is Extracellular endo-alpha-(1-&gt;5)-L-arabinanase 2 (abn2) of Bacillus subtilis (strain 168).